The sequence spans 232 residues: MENQPKLNSSKEVIAFLAERFPHCFSAEGEARPLKIGIFQDLVDRVAGEMNLSKTQLRSALRLYTSSWRYLYGVKPGATRVDLDGNPCGELDEQHVEHARKQLEEAKARVQAQRAEQQAKKREAAAAAGEKEDAPRRERKPRPTTPRRKEGAERKPRSQKPVEKAPKTVKAPREEQHTPVSDISALTVGQALKVKAGQNAMDATVLEITKDGVRVQLNSGMSLIVRAEHLVF.

The interval 105 to 182 is disordered; the sequence is EAKARVQAQR…REEQHTPVSD (78 aa). Positions 117 to 136 are enriched in basic and acidic residues; sequence QQAKKREAAAAAGEKEDAPR. Basic residues predominate over residues 137 to 146; that stretch reads RERKPRPTTP. A compositionally biased stretch (basic and acidic residues) spans 147–177; sequence RRKEGAERKPRSQKPVEKAPKTVKAPREEQH.

The protein belongs to the ProQ family.

The protein localises to the cytoplasm. In terms of biological role, RNA chaperone with significant RNA binding, RNA strand exchange and RNA duplexing activities. May regulate ProP activity through an RNA-based, post-transcriptional mechanism. The polypeptide is RNA chaperone ProQ (Escherichia coli (strain UTI89 / UPEC)).